The sequence spans 553 residues: Probable glucomannan 4-beta-mannosyltransferase 1 (553 aa).

Residues 64–84 traverse the membrane as a helical segment; sequence LLPVFKGLVVMCLVLSIIVFF. Asp163 is a catalytic residue. Substrate is bound by residues Asp222 and Asp224. The active site involves Asp316. The next 4 membrane-spanning stretches (helical) occupy residues 395 to 415, 431 to 451, 510 to 530, and 531 to 551; these read VAVH…SVFF, LISI…IFWV, EVMV…YGHT, and WLHF…FGFV.

Belongs to the glycosyltransferase 2 family. Plant cellulose synthase-like A subfamily.

It localises to the golgi apparatus membrane. It carries out the reaction GDP-mannose + (glucomannan)n = GDP + (glucomannan)n+1.. Functionally, probable mannan synthase which consists of a 4-beta-mannosyltransferase activity on mannan using GDP-mannose. The beta-1,4-mannan product is the backbone for galactomannan synthesis by galactomannan galactosyltransferase. Galactomannan is a noncellulosic polysaccharides of plant cell wall. The protein is Probable glucomannan 4-beta-mannosyltransferase 1 of Arabidopsis thaliana (Mouse-ear cress).